The following is a 271-amino-acid chain: Protein PXR1 (271 aa).

One can recognise a G-patch domain in the interval 25–72 (TSRFGHQFLEKFGWKPGMGLGLSPMNSNTSHIKVSIKDDNVGLGAKLK). Positions 147-239 (SNAKKRKREG…SASNIPDAVN (93 aa)) are disordered. A compositionally biased stretch (acidic residues) spans 157–168 (DDSEDEDDDDKE). The segment covering 175–203 (KKHKKHKKHKKDKKKDKKDKKEHKKHKKE) has biased composition (basic residues). Residues 204-221 (EKRLKKEKRAEKTKETKK) show a composition bias toward basic and acidic residues. Serine 230 carries the phosphoserine modification.

The protein belongs to the PINX1 family. In terms of assembly, interacts with EST2.

It is found in the nucleus. The protein localises to the nucleolus. Its function is as follows. Involved in rRNA-processing at A0, A1 and A2 sites through its action in U18 and U24 snoRNA 3'-end final trimming. Negative regulator of telomerase through competition for binding to EST2 with TLC1. The protein is Protein PXR1 (PXR1) of Saccharomyces cerevisiae (strain ATCC 204508 / S288c) (Baker's yeast).